Consider the following 57-residue polypeptide: RPGFCELPAAKGLCKAHKPAFYYNKDSHRCQKFIYGGCGGNANRFRTIDECNRTCVG.

Residues 5 to 55 (CELPAAKGLCKAHKPAFYYNKDSHRCQKFIYGGCGGNANRFRTIDECNRTC) enclose the BPTI/Kunitz inhibitor domain. 3 disulfides stabilise this stretch: Cys-5–Cys-55, Cys-14–Cys-38, and Cys-30–Cys-51.

It belongs to the venom Kunitz-type family. In terms of tissue distribution, expressed by the venom gland.

It localises to the secreted. Functionally, serine protease inhibitor that inhibits trypsin (Ki=0.0035 nM). The chain is Kunitz-type serine protease inhibitor from Naja naja (Indian cobra).